A 617-amino-acid chain; its full sequence is V-type proton ATPase catalytic subunit A (617 aa).

250–257 (GAFGCGKT) is a binding site for ATP. A Phosphoserine; by AMPK modification is found at Ser384.

Belongs to the ATPase alpha/beta chains family. V-ATPase is a heteromultimeric enzyme made up of two complexes: the ATP-hydrolytic V1 complex and the proton translocation V0 complex. The V1 complex consists of three catalytic AB heterodimers that form a heterohexamer, three peripheral stalks each consisting of EG heterodimers, one central rotor including subunits D and F, and the regulatory subunits C and H. The proton translocation complex V0 consists of the proton transport subunit a, a ring of proteolipid subunits c9c'', rotary subunit d, subunits e and f, and the accessory subunits ATP6AP1/Ac45 and ATP6AP2/PRR. Interacts with the V0 complex V-ATPase subunit a4 ATP6V0A4. Interacts with WFS1. Interacts with alpha-crystallin B chain/CRYAB and with MTOR, forming a ternary complex. Phosphorylation at Ser-384 by AMPK down-regulates its enzyme activity.

It localises to the cytoplasm. It is found in the cytosol. Its subcellular location is the cytoplasmic vesicle. The protein localises to the secretory vesicle. The protein resides in the clathrin-coated vesicle membrane. It localises to the lysosome. It carries out the reaction ATP + H2O + 4 H(+)(in) = ADP + phosphate + 5 H(+)(out). Its activity is regulated as follows. ATP hydrolysis occurs at the interface between the nucleotide-binding domains of subunits A and B. ATP hydrolysis triggers a conformational change in the subunits D and F, which induces a shift of subunit d. The c-ring is subsequently rotated and results in a continuous proton translocation across the membrane. In terms of biological role, catalytic subunit of the V1 complex of vacuolar(H+)-ATPase (V-ATPase), a multisubunit enzyme composed of a peripheral complex (V1) that hydrolyzes ATP and a membrane integral complex (V0) that translocates protons. V-ATPase is responsible for acidifying and maintaining the pH of intracellular compartments and in some cell types, is targeted to the plasma membrane, where it is responsible for acidifying the extracellular environment. In aerobic conditions, involved in intracellular iron homeostasis, thus triggering the activity of Fe(2+) prolyl hydroxylase (PHD) enzymes, and leading to HIF1A hydroxylation and subsequent proteasomal degradation. May play a role in neurite development and synaptic connectivity. The sequence is that of V-type proton ATPase catalytic subunit A (Atp6v1a) from Mus musculus (Mouse).